Reading from the N-terminus, the 656-residue chain is Tetratricopeptide repeat protein 30 homolog (656 aa).

9 TPR repeats span residues 9 to 42 (EGEFTSTIYTLIHEHKFNDAIRILQYQHERNPKN), 43 to 76 (LAALSLLAYCYYYTQDFMNAADCYSQLSYNFPQY), 141 to 174 (AAVIINTACIDYKEGNYEEALKKFNEATEFSGYQ), 176 to 208 (GLAYSIALCHYRRGDYDSALKLISEIINRGVKD), 238 to 271 (IEAFNLKFAIYYRTKDFKAAKESLTDMPPRNEHD), 378 to 412 (RKTAIEIQIKKEQKTTDSDDSLEMRNLIESYDDSL), 416 to 449 (LPVLMTYAKYYWDKRDYQAVEKLFRNSVDYCKEH), 451 to 484 (TWKLNVAHTIFMQEKKYKDAAAFYEPIVHKKYDD), and 537 to 570 (SIISLVIGSLYCSKGNFEFGISRVVKALEPPEKK).

The protein belongs to the TTC30/dfy-1/fleer family. As to quaternary structure, component of the IFT complex B composed of at least che-2, che-13, dyf-1, dyf-3, dyf-6, dyf-11, dyf-13, ift-20, ift-74, ift-81, ifta-2, osm-1, osm-5 and osm-6. As to expression, expressed in most amphid, both phasmid and several labial-quadrant neurons.

It is found in the cell projection. The protein localises to the cilium. In terms of biological role, plays a role in anterograde intraflagellar transport (IFT), the process by which cilia precursors are transported from the base of the cilium to the site of their incorporation at the tip. Specifically required for the kinesin osm-3 to dock onto and move the IFT particles which contain these precursors. Component of the intraflagellar transport (IFT) complex B required for transport of proteins in the motile cilium. May be required for ciliary entrance and transport of specific ciliary cargo proteins such as che-3 which are related to motility. Required for polyglutamylation of axonemal tubulin in sensory cilia. This chain is Tetratricopeptide repeat protein 30 homolog, found in Caenorhabditis elegans.